Consider the following 622-residue polypeptide: Basal cell adhesion molecule (622 aa).

The signal sequence occupies residues 1–25 (MEPPDARAGLLWLTFLLSGYSGAQA). 2 Ig-like V-type domains span residues 26–135 (ELHV…SSVR) and 140–250 (PEDT…HTFR). At 26–541 (ELHVSVPPRV…GSVAPQTAQA (516 aa)) the chain is on the extracellular side. 3 disulfides stabilise this stretch: Cys47/Cys118, Cys165/Cys230, and Cys284/Cys330. Ig-like C2-type domains lie at 267–342 (PSTT…EEVQ), 356–435 (PLEL…QSFQ), and 442–532 (PELK…FHFG). Asn314, Asn323, Asn370, and Asn377 each carry an N-linked (GlcNAc...) asparagine glycan. 2 disulfides stabilise this stretch: Cys378–Cys418 and Cys467–Cys516. Residues 542 to 562 (GVAVMAVAVSVGLLLLVVAAF) traverse the membrane as a helical segment. Topologically, residues 563 to 622 (YCMRRKGRPGCCRRAEKGAPPAREPELSHSGSERPEHTGLLMGGPSGGGRGGSGGFGDEC) are cytoplasmic. Residues 574-622 (CRRAEKGAPPAREPELSHSGSERPEHTGLLMGGPSGGGRGGSGGFGDEC) are disordered. Positions 575-599 (RRAEKGAPPAREPELSHSGSERPEH) are enriched in basic and acidic residues. Residues Ser590, Ser592, Ser594, and Ser615 each carry the phosphoserine modification. The span at 603–622 (LMGGPSGGGRGGSGGFGDEC) shows a compositional bias: gly residues.

Homodimer. Interacts with ITGA4:ITGB1. Interacts with spectrins SPTA1 and SPTB1. Post-translationally, epinephrine-stimulated phosphorylation of Ser-615 by PKA enhances adhesion to laminin. Ser-615 can also be phosphorylated by AKT1.

The protein localises to the cell membrane. Transmembrane glycoprotein that functions as both a receptor and an adhesion molecule playing a crucial role in cell adhesion, motility, migration and invasion. Extracellular domain enables binding to extracellular matrix proteins, such as laminin, integrin and other ligands while its intracellular domain interacts with cytoskeletal proteins like hemoglobin, facilitating cell signal transduction. Serves as a receptor for laminin alpha-5/LAMA5 to promote cell adhesion. Mechanistically, JAK2 induces BCAM phosphorylation and activates its adhesion to laminin by stimulating a Rap1/AKT signaling pathway in the absence of EPOR. This Mus musculus (Mouse) protein is Basal cell adhesion molecule (Bcam).